Here is a 77-residue protein sequence, read N- to C-terminus: U8-lycotoxin-Ls1m (77 aa).

An N-terminal signal peptide occupies residues 1-20; sequence MKLIIFTGLVLFSIVSLIEA. A propeptide spanning residues 21–26 is cleaved from the precursor; sequence QAENEK.

This sequence belongs to the neurotoxin 19 (CSTX) family. 08 (U8-Lctx) subfamily. Post-translationally, contains 4 disulfide bonds. In terms of tissue distribution, expressed by the venom gland.

It is found in the secreted. This chain is U8-lycotoxin-Ls1m, found in Lycosa singoriensis (Wolf spider).